Consider the following 765-residue polypeptide: Glycine--tRNA ligase (765 aa).

The N-terminal 87 residues, 1–87 (MSLQLLKALP…LRSAAAEFIM (87 aa)), are a transit peptide targeting the mitochondrion. A disordered region spans residues 41-73 (TTTKPTPSAPPPPPPTQPQQPAATTSWGTKKQN). Over residues 47–58 (PSAPPPPPPTQP) the composition is skewed to pro residues. In terms of domain architecture, WHEP-TRS spans 95–151 (QLAPLRERVQEQGNLVRDLKAKGAPEIDVKKAVAELKARKKLLEDKELALTPSVVSF). Residue glutamate 331 participates in glycine binding. ATP contacts are provided by residues 363–365 (RNE) and 374–375 (RV). Glutamate 382 is a binding site for glycine. 489 to 490 (EC) serves as a coordination point for ATP. 609–611 (EPS) serves as a coordination point for glycine. Residue arginine 616 participates in ATP binding.

This sequence belongs to the class-II aminoacyl-tRNA synthetase family. Homodimer.

The protein resides in the mitochondrion. It localises to the cytoplasm. Its subcellular location is the cell projection. The protein localises to the axon. It catalyses the reaction 2 ATP + H(+) = P(1),P(4)-bis(5'-adenosyl) tetraphosphate + diphosphate. The catalysed reaction is tRNA(Gly) + glycine + ATP = glycyl-tRNA(Gly) + AMP + diphosphate. Its function is as follows. Catalyzes the ATP-dependent ligation of glycine to the 3'-end of its cognate tRNA, via the formation of an aminoacyl-adenylate intermediate (Gly-AMP). Also produces diadenosine tetraphosphate (Ap4A), a universal pleiotropic signaling molecule needed for cell regulation pathways, by direct condensation of 2 ATPs. Thereby, may play a special role in Ap4A homeostasis. Required for terminal arborization of both dendrites and axons during development. The protein is Glycine--tRNA ligase of Drosophila melanogaster (Fruit fly).